Consider the following 122-residue polypeptide: Conotoxin flf14.2 (122 aa).

The first 22 residues, 1–22 (MGFRVLVLIVMVTTSALPFTFS), serve as a signal peptide directing secretion. Positions 23 to 96 (EESGRSPFRP…AESPVGQKRW (74 aa)) are excised as a propeptide. The tract at residues 53–91 (RADGQPSDMRQPEMRRPEMRRPEVRRPEVRQPEFAESPV) is disordered. Residues 62 to 85 (RQPEMRRPEMRRPEVRRPEVRQPE) are compositionally biased toward basic and acidic residues. Cystine bridges form between cysteine 101-cysteine 121 and cysteine 105-cysteine 117.

This sequence belongs to the conotoxin R superfamily. As to expression, expressed by the venom duct.

It is found in the secreted. The protein is Conotoxin flf14.2 of Conus anabathrum floridanus (Florida cone).